We begin with the raw amino-acid sequence, 156 residues long: Small ribosomal subunit protein uS7 (156 aa).

The protein belongs to the universal ribosomal protein uS7 family. As to quaternary structure, part of the 30S ribosomal subunit. Contacts proteins S9 and S11.

Its function is as follows. One of the primary rRNA binding proteins, it binds directly to 16S rRNA where it nucleates assembly of the head domain of the 30S subunit. Is located at the subunit interface close to the decoding center, probably blocks exit of the E-site tRNA. This is Small ribosomal subunit protein uS7 from Chelativorans sp. (strain BNC1).